Consider the following 488-residue polypeptide: NAD-reducing hydrogenase HoxS subunit beta (488 aa).

Ni(2+) is bound by residues Cys-62, Cys-65, Cys-458, and Cys-461.

It belongs to the [NiFe]/[NiFeSe] hydrogenase large subunit family. In terms of assembly, tetramer of an alpha and a gamma subunits (flavin-containing dimer), and a delta and a nickel-containing beta subunits (hydrogenase dimer). FMN serves as cofactor. It depends on Ni(2+) as a cofactor.

The protein localises to the cytoplasm. The enzyme catalyses H2 + NAD(+) = NADH + H(+). In Cupriavidus necator (strain ATCC 17699 / DSM 428 / KCTC 22496 / NCIMB 10442 / H16 / Stanier 337) (Ralstonia eutropha), this protein is NAD-reducing hydrogenase HoxS subunit beta (hoxH).